Here is a 245-residue protein sequence, read N- to C-terminus: Ubiquinone/menaquinone biosynthesis C-methyltransferase UbiE (245 aa).

S-adenosyl-L-methionine is bound by residues threonine 71, aspartate 92, and 118-119 (DA).

This sequence belongs to the class I-like SAM-binding methyltransferase superfamily. MenG/UbiE family.

The catalysed reaction is a 2-demethylmenaquinol + S-adenosyl-L-methionine = a menaquinol + S-adenosyl-L-homocysteine + H(+). The enzyme catalyses a 2-methoxy-6-(all-trans-polyprenyl)benzene-1,4-diol + S-adenosyl-L-methionine = a 5-methoxy-2-methyl-3-(all-trans-polyprenyl)benzene-1,4-diol + S-adenosyl-L-homocysteine + H(+). It participates in quinol/quinone metabolism; menaquinone biosynthesis; menaquinol from 1,4-dihydroxy-2-naphthoate: step 2/2. Its pathway is cofactor biosynthesis; ubiquinone biosynthesis. Functionally, methyltransferase required for the conversion of demethylmenaquinol (DMKH2) to menaquinol (MKH2) and the conversion of 2-polyprenyl-6-methoxy-1,4-benzoquinol (DDMQH2) to 2-polyprenyl-3-methyl-6-methoxy-1,4-benzoquinol (DMQH2). The sequence is that of Ubiquinone/menaquinone biosynthesis C-methyltransferase UbiE from Neisseria gonorrhoeae (strain ATCC 700825 / FA 1090).